A 795-amino-acid chain; its full sequence is Delta-1-pyrroline-5-carboxylate synthase (795 aa).

A glutamate 5-kinase region spans residues 1 to 361 (MLSQVYRCGF…FFSEVKPAGP (361 aa)). Ser-117, Asp-223, and Asn-246 together coordinate substrate. Residues 266–267 (SD) and 305–311 (MGGMEAK) contribute to the ATP site. An N6-succinyllysine mark is found at Lys-311, Lys-347, and Lys-550. A gamma-glutamyl phosphate reductase region spans residues 362–795 (TVEQQGEMAR…NLPIPQRNTN (434 aa)).

The protein in the N-terminal section; belongs to the glutamate 5-kinase family. In the C-terminal section; belongs to the gamma-glutamyl phosphate reductase family. As to quaternary structure, can form homodimers/multimers.

The protein localises to the mitochondrion. The protein resides in the mitochondrion matrix. The enzyme catalyses L-glutamate + ATP = L-glutamyl 5-phosphate + ADP. The catalysed reaction is L-glutamate 5-semialdehyde + phosphate + NADP(+) = L-glutamyl 5-phosphate + NADPH + H(+). It functions in the pathway amino-acid biosynthesis; L-proline biosynthesis; L-glutamate 5-semialdehyde from L-glutamate: step 1/2. The protein operates within amino-acid biosynthesis; L-proline biosynthesis; L-glutamate 5-semialdehyde from L-glutamate: step 2/2. Its activity is regulated as follows. Isoform Short: Inhibited by L-ornithine with a Ki of approximately 0.25 mm. Isoform Long: Insensitive to ornithine inhibition. This is due to the two amino acid insert which abolishes feedback inhibition of P5CS activity by L-ornithine. Bifunctional enzyme that converts glutamate to glutamate 5-semialdehyde, an intermediate in the biosynthesis of proline, ornithine and arginine. This is Delta-1-pyrroline-5-carboxylate synthase (ALDH18A1) from Homo sapiens (Human).